The sequence spans 547 residues: Chaperonin GroEL 1 (547 aa).

ATP-binding positions include 30–33 (TLGP), lysine 51, 87–91 (DGTTT), glycine 415, and aspartate 496.

Belongs to the chaperonin (HSP60) family. In terms of assembly, forms a cylinder of 14 subunits composed of two heptameric rings stacked back-to-back. Interacts with the co-chaperonin GroES.

The protein localises to the cytoplasm. It carries out the reaction ATP + H2O + a folded polypeptide = ADP + phosphate + an unfolded polypeptide.. Functionally, together with its co-chaperonin GroES, plays an essential role in assisting protein folding. The GroEL-GroES system forms a nano-cage that allows encapsulation of the non-native substrate proteins and provides a physical environment optimized to promote and accelerate protein folding. The polypeptide is Chaperonin GroEL 1 (Bradyrhizobium sp. (strain BTAi1 / ATCC BAA-1182)).